The following is a 305-amino-acid chain: Acetylglutamate kinase (305 aa).

Substrate contacts are provided by residues 80 to 81 (GG), arginine 102, and asparagine 196.

Belongs to the acetylglutamate kinase family. ArgB subfamily.

It is found in the cytoplasm. The catalysed reaction is N-acetyl-L-glutamate + ATP = N-acetyl-L-glutamyl 5-phosphate + ADP. It functions in the pathway amino-acid biosynthesis; L-arginine biosynthesis; N(2)-acetyl-L-ornithine from L-glutamate: step 2/4. In terms of biological role, catalyzes the ATP-dependent phosphorylation of N-acetyl-L-glutamate. This is Acetylglutamate kinase from Chlorobium luteolum (strain DSM 273 / BCRC 81028 / 2530) (Pelodictyon luteolum).